The following is a 341-amino-acid chain: Ribosomal RNA small subunit methyltransferase H (341 aa).

Residues G47–Y49, D64, F91, D109, and Q116 contribute to the S-adenosyl-L-methionine site. The interval V292–P319 is disordered.

The protein belongs to the methyltransferase superfamily. RsmH family.

The protein localises to the cytoplasm. It catalyses the reaction cytidine(1402) in 16S rRNA + S-adenosyl-L-methionine = N(4)-methylcytidine(1402) in 16S rRNA + S-adenosyl-L-homocysteine + H(+). In terms of biological role, specifically methylates the N4 position of cytidine in position 1402 (C1402) of 16S rRNA. This is Ribosomal RNA small subunit methyltransferase H from Rhizobium meliloti (strain 1021) (Ensifer meliloti).